A 396-amino-acid polypeptide reads, in one-letter code: Ribosomal RNA large subunit methyltransferase I (396 aa).

Residues 2–81 (SVRLVLAKGR…ESIDIAFFSR (80 aa)) form the PUA domain.

Belongs to the methyltransferase superfamily. RlmI family.

The protein localises to the cytoplasm. The catalysed reaction is cytidine(1962) in 23S rRNA + S-adenosyl-L-methionine = 5-methylcytidine(1962) in 23S rRNA + S-adenosyl-L-homocysteine + H(+). Specifically methylates the cytosine at position 1962 (m5C1962) of 23S rRNA. The chain is Ribosomal RNA large subunit methyltransferase I from Shigella flexneri.